The primary structure comprises 224 residues: Germin-like protein 8-5 (224 aa).

The signal sequence occupies residues 1-22 (MASPSSLCLLAALALISWQAMA). Residues Cys-32 and Cys-47 are joined by a disulfide bond. One can recognise a Cupin type-1 domain in the interval 62–212 (AKLDTPRKTN…AFQVEKGTID (151 aa)). N-linked (GlcNAc...) asparagine glycosylation occurs at Asn-76. Residues His-109, His-111, and Glu-116 each coordinate Mn(2+). N-linked (GlcNAc...) asparagine glycosylation occurs at Asn-135. His-157 contributes to the Mn(2+) binding site.

It belongs to the germin family. In terms of assembly, oligomer (believed to be a pentamer but probably hexamer).

It is found in the secreted. It localises to the extracellular space. The protein localises to the apoplast. Its function is as follows. Plays a role in broad-spectrum disease resistance. Probably has no oxalate oxidase activity even if the active site is conserved. This chain is Germin-like protein 8-5, found in Oryza sativa subsp. japonica (Rice).